Here is a 282-residue protein sequence, read N- to C-terminus: B3 domain-containing protein At5g06250 (282 aa).

Positions 46–159 (FEKSLTPSDV…RLFIGWRRRG (114 aa)) form a DNA-binding region, TF-B3.

The protein localises to the nucleus. This chain is B3 domain-containing protein At5g06250, found in Arabidopsis thaliana (Mouse-ear cress).